A 1058-amino-acid chain; its full sequence is MASSSSRTRSRSPFSHRRPPSPYSSASSTSSSLINNRLLPRSSSTPTSTVYNSGGVTGSRSMSITRTISDSGPIGGSGTYGAQSYPSEGLIGESGQTITSERDSISVTVRFRPMSEREYQRGDEIVWYPDADKMVRNEYNPLTAYAFDKVFGPQSTTPEVYDVAAKPVVKAAMEGVNGTVFAYGVTSSGKTHTMHGDQDFPGIIPLAIKDVFSIIQETTGREFLLRVSYLEIYNEVINDLLDPTGQNLRIREDSQGTYVEGIKEEVVLSPGHALSFIAAGEEHRHVGSNNFNLMSSRSHTIFTLMIESSAHGDQYDGVIFSQLNLIDLAGSESSKTETTGLRRKEGAYINKSLLTLGTVIGKLTEGKTTHVPFRDSKLTRLLQSSLSGHGHVSLICTVTPASSSTEETHNTLKFASRAKRIEINASRNKIIDEKSLIKKYQKEISTLKVELDQLRRGVLVGVSHEELLSLKQQLQEGQVKMQSRLEEEEEAKAALMSRIQKLTKLILVSTKNSIPGYLGDTPAHSRSISAGKDDKLDSLLLDSDNLASPSSTLSLASDARRSSSKFKDENSPVGSRAELTQGVMTPDEMDLLVEQVKMLAGEIAFGTSTLKRLVDQSMNDPENSKTQIQNLENDIQEKQRQMKSLEQRITESGEASIANASSIEMQEKVMRLMTQCNEKSFELEIISADNRILQEQLQTKCTENNELHEKVHLLEQRLSSQKATLSCCDVVTEEYVDELKKKVQSQEIENEKLKLEHVQSVEEKSGLRVQNQKLAEEASYAKELASAAAIELKNLADEVTKLSLQNAKLEKELVAARDLAAAAQKRNNNSMNSAANRNGTRPGRKARISDSWNLNQENLTMELQARKQREAVLEAALAEKEYIEEEFRKKAEEAKRREEALENDLANMWVLVAKLKKANSGALSIQKSDEAEPAKEDEVTELDNKNEQNAILKERQLVNGHEEVIVAKAEETPKEEPLVARLKARMQEMKEKEMKSQAAAAANADANSHICKVCFESPTATILLPCRHFCLCKSCSLACSECPICRTKISDRLFAFPS.

A chloroplast-targeting transit peptide spans 1-60; it reads MASSSSRTRSRSPFSHRRPPSPYSSASSTSSSLINNRLLPRSSSTPTSTVYNSGGVTGSR. The disordered stretch occupies residues 1–92; sequence MASSSSRTRS…QSYPSEGLIG (92 aa). The segment covering 8–19 has biased composition (basic residues); that stretch reads TRSRSPFSHRRP. Low complexity predominate over residues 23–49; it reads YSSASSTSSSLINNRLLPRSSSTPTST. Residues 50 to 70 are compositionally biased toward polar residues; that stretch reads VYNSGGVTGSRSMSITRTISD. The Kinesin motor domain occupies 104-421; it reads SISVTVRFRP…LKFASRAKRI (318 aa). 184–191 contacts ATP; that stretch reads GVTSSGKT. A coiled-coil region spans residues 422 to 509; the sequence is EINASRNKII…QKLTKLILVS (88 aa). Residues 549–578 form a disordered region; that stretch reads PSSTLSLASDARRSSSKFKDENSPVGSRAE. A compositionally biased stretch (basic and acidic residues) spans 558 to 570; it reads DARRSSSKFKDEN. Coiled-coil stretches lie at residues 621–658, 704–826, 873–904, and 935–999; these read PENS…ASIA, NNEL…AQKR, LEAA…LEND, and KEDE…SQAA. Low complexity predominate over residues 824 to 838; the sequence is QKRNNNSMNSAANRN. Residues 824–847 are disordered; sequence QKRNNNSMNSAANRNGTRPGRKAR. The interval 922-946 is disordered; it reads ALSIQKSDEAEPAKEDEVTELDNKN. Basic and acidic residues predominate over residues 927-946; it reads KSDEAEPAKEDEVTELDNKN. An RING-type zinc finger spans residues 1011-1046; that stretch reads CKVCFESPTATILLPCRHFCLCKSCSLACSECPICR.

The protein belongs to the TRAFAC class myosin-kinesin ATPase superfamily. Kinesin family. KIN-7 subfamily.

The protein localises to the plastid. It is found in the chloroplast. The chain is Kinesin-like protein KIN-7M, chloroplastic from Arabidopsis thaliana (Mouse-ear cress).